The sequence spans 106 residues: Glutaredoxin-1 (106 aa).

Alanine 2 carries the post-translational modification N-acetylalanine. Positions 3–106 constitute a Glutaredoxin domain; it reads QAFVNSKIQP…TRLQQIGALK (104 aa). At lysine 9 the chain carries N6-succinyllysine. 2 disulfide bridges follow: cysteine 23-cysteine 26 and cysteine 79-cysteine 83.

This sequence belongs to the glutaredoxin family.

The protein localises to the cytoplasm. Its function is as follows. Has a glutathione-disulfide oxidoreductase activity in the presence of NADPH and glutathione reductase. Reduces low molecular weight disulfides and proteins. In Sus scrofa (Pig), this protein is Glutaredoxin-1 (GLRX).